The primary structure comprises 345 residues: Probable RuBisCO transcriptional regulator (345 aa).

In terms of domain architecture, HTH lysR-type spans 6–63 (FTLDQLRILKAIASEGSFKRAADTLYVSQPAVSLQVQNLEKQLSVPLFDRGGRKAQLT). Positions 23 to 42 (FKRAADTLYVSQPAVSLQVQ) form a DNA-binding region, H-T-H motif. Residues 311–345 (LDPERLFANPYSSNNGDRQGDGKDGKGSIEIDSVT) are disordered. A compositionally biased stretch (basic and acidic residues) spans 328 to 339 (RQGDGKDGKGSI).

Belongs to the LysR transcriptional regulatory family.

Trans-acting transcriptional regulator of RuBisCO genes (rbcL and rbcS) expression. This is Probable RuBisCO transcriptional regulator (rbcR) from Synechocystis sp. (strain ATCC 27184 / PCC 6803 / Kazusa).